The primary structure comprises 147 residues: Histone H2B (147 aa).

The segment covering 1 to 31 (MAPKAEKKPAEKKPAEEKKAVAEKAPAEKKP) has biased composition (basic and acidic residues). The disordered stretch occupies residues 1–55 (MAPKAEKKPAEKKPAEEKKAVAEKAPAEKKPKAGKKLPKEGGAAAGDKKKKRVKK). N6-acetyllysine is present on residues K7, K35, and K36. K143 participates in a covalent cross-link: Glycyl lysine isopeptide (Lys-Gly) (interchain with G-Cter in ubiquitin).

This sequence belongs to the histone H2B family. In terms of assembly, the nucleosome is a histone octamer containing two molecules each of H2A, H2B, H3 and H4 assembled in one H3-H4 heterotetramer and two H2A-H2B heterodimers. The octamer wraps approximately 147 bp of DNA. In terms of processing, can be acetylated to form H2BK6ac, H2BK33ac and H2BK34ac. Post-translationally, monoubiquitinated to form H2BK143ub1; may give a specific tag for epigenetic transcriptional activation.

Its subcellular location is the nucleus. It localises to the chromosome. Functionally, core component of nucleosome. Nucleosomes wrap and compact DNA into chromatin, limiting DNA accessibility to the cellular machineries which require DNA as a template. Histones thereby play a central role in transcription regulation, DNA repair, DNA replication and chromosomal stability. DNA accessibility is regulated via a complex set of post-translational modifications of histones, also called histone code, and nucleosome remodeling. The chain is Histone H2B (HIS2B) from Gossypium hirsutum (Upland cotton).